Here is a 164-residue protein sequence, read N- to C-terminus: Respiratory growth induced protein 2 (164 aa).

The protein belongs to the RGI1 family.

It is found in the cytoplasm. Functionally, involved in the control of energetic metabolism and significantly contribute to cell fitness, especially under respiratory growth conditions. This is Respiratory growth induced protein 2 (RGI2) from Candida glabrata (strain ATCC 2001 / BCRC 20586 / JCM 3761 / NBRC 0622 / NRRL Y-65 / CBS 138) (Yeast).